A 291-amino-acid chain; its full sequence is ATP synthase subunit a (291 aa).

5 helical membrane passes run Phe-47–Val-67, His-140–Phe-160, Phe-167–Leu-187, Met-207–Leu-227, and Ile-230–Glu-250.

The protein belongs to the ATPase A chain family. In terms of assembly, F-type ATPases have 2 components, CF(1) - the catalytic core - and CF(0) - the membrane proton channel. CF(1) has five subunits: alpha(3), beta(3), gamma(1), delta(1), epsilon(1). CF(0) has three main subunits: a, b and c.

The protein localises to the mitochondrion inner membrane. Mitochondrial membrane ATP synthase (F(1)F(0) ATP synthase or Complex V) produces ATP from ADP in the presence of a proton gradient across the membrane which is generated by electron transport complexes of the respiratory chain. F-type ATPases consist of two structural domains, F(1) - containing the extramembraneous catalytic core and F(0) - containing the membrane proton channel, linked together by a central stalk and a peripheral stalk. During catalysis, ATP synthesis in the catalytic domain of F(1) is coupled via a rotary mechanism of the central stalk subunits to proton translocation. Key component of the proton channel; it may play a direct role in the translocation of protons across the membrane. This is ATP synthase subunit a (ATP6) from Zea mays (Maize).